The sequence spans 843 residues: Pullulanase (843 aa).

The N-terminal stretch at 1–19 (MKTKLWLLLVLLLSALIFS) is a signal peptide. Asp535 serves as the catalytic Nucleophile. Glu564 acts as the Proton donor in catalysis.

This sequence belongs to the glycosyl hydrolase 13 family.

The catalysed reaction is Hydrolysis of (1-&gt;6)-alpha-D-glucosidic linkages in pullulan, amylopectin and glycogen, and in the alpha- and beta-limit dextrins of amylopectin and glycogen.. In Thermotoga maritima (strain ATCC 43589 / DSM 3109 / JCM 10099 / NBRC 100826 / MSB8), this protein is Pullulanase (pulA).